The primary structure comprises 582 residues: Putative BTB/POZ domain-containing protein At3g08660 (582 aa).

The tract at residues 1 to 21 (MGSDSTLSLPSSSPPCNNRSS) is disordered. One can recognise a BTB domain in the interval 36 to 103 (GDIIVVVDGE…CYGINFDITA (68 aa)). Positions 196–466 (EMWTEELSAL…VRVLYTEQLR (271 aa)) constitute an NPH3 domain. A Phosphotyrosine modification is found at tyrosine 407. The segment at 558–582 (GGETRQKVNRKSRSVSERKSSRSGR) is disordered. A compositionally biased stretch (basic and acidic residues) spans 571 to 582 (SVSERKSSRSGR).

The protein belongs to the NPH3 family.

It functions in the pathway protein modification; protein ubiquitination. In terms of biological role, may act as a substrate-specific adapter of an E3 ubiquitin-protein ligase complex (CUL3-RBX1-BTB) which mediates the ubiquitination and subsequent proteasomal degradation of target proteins. The protein is Putative BTB/POZ domain-containing protein At3g08660 of Arabidopsis thaliana (Mouse-ear cress).